A 225-amino-acid chain; its full sequence is Cytochrome c oxidase subunit 2 (225 aa).

Topologically, residues 1 to 25 (MSTWMMFMFQESNSLYADNLVSFHN) are mitochondrial intermembrane. A helical transmembrane segment spans residues 26–47 (MVMIIVIMISTLTVYIIFDLFL). Residues 48 to 62 (NKFSNLYLLKNHNIE) are Mitochondrial matrix-facing. Residues 63–82 (IIWMIVPIVILLIICFPSLK) form a helical membrane-spanning segment. Over 83–225 (ILYLIDEIVN…YFMNWIYKMN (143 aa)) the chain is Mitochondrial intermembrane. Cu cation-binding residues include His-159, Cys-194, Glu-196, Cys-198, His-202, and Met-205. Glu-196 contacts Mg(2+).

Belongs to the cytochrome c oxidase subunit 2 family. As to quaternary structure, component of the cytochrome c oxidase (complex IV, CIV), a multisubunit enzyme composed of a catalytic core of 3 subunits and several supernumerary subunits. The complex exists as a monomer or a dimer and forms supercomplexes (SCs) in the inner mitochondrial membrane with ubiquinol-cytochrome c oxidoreductase (cytochrome b-c1 complex, complex III, CIII). Requires Cu cation as cofactor.

The protein resides in the mitochondrion inner membrane. The catalysed reaction is 4 Fe(II)-[cytochrome c] + O2 + 8 H(+)(in) = 4 Fe(III)-[cytochrome c] + 2 H2O + 4 H(+)(out). Its function is as follows. Component of the cytochrome c oxidase, the last enzyme in the mitochondrial electron transport chain which drives oxidative phosphorylation. The respiratory chain contains 3 multisubunit complexes succinate dehydrogenase (complex II, CII), ubiquinol-cytochrome c oxidoreductase (cytochrome b-c1 complex, complex III, CIII) and cytochrome c oxidase (complex IV, CIV), that cooperate to transfer electrons derived from NADH and succinate to molecular oxygen, creating an electrochemical gradient over the inner membrane that drives transmembrane transport and the ATP synthase. Cytochrome c oxidase is the component of the respiratory chain that catalyzes the reduction of oxygen to water. Electrons originating from reduced cytochrome c in the intermembrane space (IMS) are transferred via the dinuclear copper A center (CU(A)) of subunit 2 and heme A of subunit 1 to the active site in subunit 1, a binuclear center (BNC) formed by heme A3 and copper B (CU(B)). The BNC reduces molecular oxygen to 2 water molecules using 4 electrons from cytochrome c in the IMS and 4 protons from the mitochondrial matrix. This is Cytochrome c oxidase subunit 2 (COII) from Apis florea (Dwarf honeybee).